Consider the following 359-residue polypeptide: Phospho-N-acetylmuramoyl-pentapeptide-transferase (359 aa).

10 helical membrane passes run 3–23 (LILI…PALI), 55–75 (VAIL…GMAM), 80–100 (PSAS…VGFI), 117–137 (TAKT…ALQF), 156–176 (IATV…VVSA), 187–207 (LDGL…LITF), 231–251 (LALV…WNAA), 255–275 (IFMG…ISVT), 280–300 (ILAV…VVQI), and 334–354 (FWLL…GEWL).

It belongs to the glycosyltransferase 4 family. MraY subfamily. It depends on Mg(2+) as a cofactor.

Its subcellular location is the cell membrane. It carries out the reaction UDP-N-acetyl-alpha-D-muramoyl-L-alanyl-gamma-D-glutamyl-meso-2,6-diaminopimeloyl-D-alanyl-D-alanine + di-trans,octa-cis-undecaprenyl phosphate = di-trans,octa-cis-undecaprenyl diphospho-N-acetyl-alpha-D-muramoyl-L-alanyl-D-glutamyl-meso-2,6-diaminopimeloyl-D-alanyl-D-alanine + UMP. It participates in cell wall biogenesis; peptidoglycan biosynthesis. Its function is as follows. Catalyzes the initial step of the lipid cycle reactions in the biosynthesis of the cell wall peptidoglycan: transfers peptidoglycan precursor phospho-MurNAc-pentapeptide from UDP-MurNAc-pentapeptide onto the lipid carrier undecaprenyl phosphate, yielding undecaprenyl-pyrophosphoryl-MurNAc-pentapeptide, known as lipid I. The protein is Phospho-N-acetylmuramoyl-pentapeptide-transferase of Mycolicibacterium smegmatis (strain ATCC 700084 / mc(2)155) (Mycobacterium smegmatis).